The sequence spans 419 residues: Caspase-12 (419 aa).

The CARD domain occupies 1-92 (MAARRTHERD…QLSLQFSNDE (92 aa)). Phosphoserine is present on Ser85. The interval 88 to 113 (FSNDEDDGPQKICTPSSPSESKRKVE) is disordered. Active-site residues include His250 and Cys298.

The protein belongs to the peptidase C14A family. In terms of assembly, heterotetramer that consists of two anti-parallel arranged heterodimers, each one formed by two subunits (Potential). Interacts with TRAF2 under resting conditions; this interaction is reduced in ER stress conditions. As to expression, mainly expressed in skeletal muscle and lung.

Functionally, involved in the activation cascade of caspases responsible for apoptosis execution. The polypeptide is Caspase-12 (Casp12) (Mus musculus (Mouse)).